The chain runs to 444 residues: Ribosomal protein uS12 methylthiotransferase RimO (444 aa).

Residues 1–117 form the MTTase N-terminal domain; it reads MKVGIISLGC…ITEVISSALK (117 aa). Residues Cys10, Cys46, Cys80, Cys154, Cys158, and Cys161 each contribute to the [4Fe-4S] cluster site. A Radical SAM core domain is found at 140-370; it reads YQPGPSAYIK…WEVQKEITRK (231 aa). Positions 373 to 441 constitute a TRAM domain; the sequence is EGLVGTEMRV…DYDLIGEMTN (69 aa).

The protein belongs to the methylthiotransferase family. RimO subfamily. [4Fe-4S] cluster is required as a cofactor.

It is found in the cytoplasm. It catalyses the reaction L-aspartate(89)-[ribosomal protein uS12]-hydrogen + (sulfur carrier)-SH + AH2 + 2 S-adenosyl-L-methionine = 3-methylsulfanyl-L-aspartate(89)-[ribosomal protein uS12]-hydrogen + (sulfur carrier)-H + 5'-deoxyadenosine + L-methionine + A + S-adenosyl-L-homocysteine + 2 H(+). Functionally, catalyzes the methylthiolation of an aspartic acid residue of ribosomal protein uS12. The sequence is that of Ribosomal protein uS12 methylthiotransferase RimO from Natranaerobius thermophilus (strain ATCC BAA-1301 / DSM 18059 / JW/NM-WN-LF).